Reading from the N-terminus, the 421-residue chain is Hemagglutinin-esterase (421 aa).

The first 16 residues, 1-16 (MFLLPRFILVSCIIGS), serve as a signal peptide directing secretion. The tract at residues 7 to 127 (FILVSCIIGS…SNDIWMQNKG (121 aa)) is esterase domain 1. Residues 17–392 (LGFDNPPTNV…PICVYDPLPL (376 aa)) are Virion surface-facing. Ser-40 (nucleophile) is an active-site residue. Residues Cys-44 and Cys-65 are joined by a disulfide bond. 5 N-linked (GlcNAc...) asparagine; by host glycosylation sites follow: Asn-54, Asn-89, Asn-153, Asn-236, and Asn-301. 3 cysteine pairs are disulfide-bonded: Cys-113–Cys-162, Cys-197–Cys-276, and Cys-205–Cys-249. A receptor binding region spans residues 128–266 (LFYTQVYKNM…GNYLAISNEL (139 aa)). An esterase domain 2 region spans residues 267 to 379 (LLTVPTKAIC…RCPTAADINT (113 aa)). Cys-307 and Cys-312 are disulfide-bonded. A glycan (N-linked (GlcNAc...) asparagine; by host) is linked at Asn-316. Catalysis depends on charge relay system residues Asp-326 and His-329. Cys-347 and Cys-371 are joined by a disulfide. An N-linked (GlcNAc...) asparagine; by host glycan is attached at Asn-358. Residues 393-413 (ILLGILLGVAVIIIVVLLLYF) traverse the membrane as a helical segment. The Intravirion portion of the chain corresponds to 414–421 (MVENGTRL). The N-linked (GlcNAc...) asparagine; by host glycan is linked to Asn-417.

This sequence belongs to the influenza type C/coronaviruses hemagglutinin-esterase family. Homodimer; disulfide-linked. Forms a complex with the M protein in the pre-Golgi. Associates then with S-M complex to form a ternary complex S-M-HE. Post-translationally, N-glycosylated in the host RER.

The protein localises to the virion membrane. Its subcellular location is the host cell membrane. The catalysed reaction is N-acetyl-9-O-acetylneuraminate + H2O = N-acetylneuraminate + acetate + H(+). It carries out the reaction N-acetyl-4-O-acetylneuraminate + H2O = N-acetylneuraminate + acetate + H(+). Its function is as follows. Structural protein that makes short spikes at the surface of the virus. Contains receptor binding and receptor-destroying activities. Mediates de-O-acetylation of N-acetyl-4-O-acetylneuraminic acid, which is probably the receptor determinant recognized by the virus on the surface of erythrocytes and susceptible cells. This receptor-destroying activity is important for virus release as it probably helps preventing self-aggregation and ensures the efficient spread of the progeny virus from cell to cell. May serve as a secondary viral attachment protein for initiating infection, the spike protein being the major one. May become a target for both the humoral and the cellular branches of the immune system. This is Hemagglutinin-esterase from Bos taurus (Bovine).